The primary structure comprises 436 residues: Nicotinate phosphoribosyltransferase (436 aa).

Residue H231 is modified to Phosphohistidine; by autocatalysis.

It belongs to the NAPRTase family. In terms of processing, transiently phosphorylated on a His residue during the reaction cycle. Phosphorylation strongly increases the affinity for substrates and increases the rate of nicotinate D-ribonucleotide production. Dephosphorylation regenerates the low-affinity form of the enzyme, leading to product release.

It catalyses the reaction nicotinate + 5-phospho-alpha-D-ribose 1-diphosphate + ATP + H2O = nicotinate beta-D-ribonucleotide + ADP + phosphate + diphosphate. Its pathway is cofactor biosynthesis; NAD(+) biosynthesis; nicotinate D-ribonucleotide from nicotinate: step 1/1. Catalyzes the synthesis of beta-nicotinate D-ribonucleotide from nicotinate and 5-phospho-D-ribose 1-phosphate at the expense of ATP. The polypeptide is Nicotinate phosphoribosyltransferase (Vibrio campbellii (strain ATCC BAA-1116)).